A 154-amino-acid chain; its full sequence is Protein X (154 aa).

Residues 68–117 (PCALRFTSARRMETTVNAHQFLPKVLHKRTLGLSAMSTTDLEAYFKDCLF) are mitochondrial targeting sequence.

It belongs to the orthohepadnavirus protein X family. As to quaternary structure, may form homodimer. May interact with host CEBPA, CFLAR, CREB1, DDB1, E4F1, HBXIP, HSPD1/HSP60, NFKBIA, POLR2E and SMAD4. Interacts with host SMC5-SMC6 complex and induces its degradation. Interacts with host TRPC4AP; leading to prevent ubiquitination of TRPC4AP. Interacts with host PLSCR1; this interaction promotes ubiquitination and degradation of HBx and impairs HBx-mediated cell proliferation. A fraction may be phosphorylated in insect cells and HepG2 cells, a human hepatoblastoma cell line. Phosphorylated in vitro by host protein kinase C or mitogen-activated protein kinase. N-acetylated in insect cells.

It localises to the host cytoplasm. It is found in the host nucleus. Its subcellular location is the host mitochondrion. In terms of biological role, multifunctional protein that plays a role in silencing host antiviral defenses and promoting viral transcription. Does not seem to be essential for HBV infection. May be directly involved in development of cirrhosis and liver cancer (hepatocellular carcinoma). Most of cytosolic activities involve modulation of cytosolic calcium. The effect on apoptosis is controversial depending on the cell types in which the studies have been conducted. May induce apoptosis by localizing in mitochondria and causing loss of mitochondrial membrane potential. May also modulate apoptosis by binding host CFLAR, a key regulator of the death-inducing signaling complex (DISC). Promotes viral transcription by using the host E3 ubiquitin ligase DDB1 to target the SMC5-SMC6 complex to proteasomal degradation. This host complex would otherwise bind to viral episomal DNA, and prevents its transcription. Moderately stimulates transcription of many different viral and cellular transcription elements. Promoters and enhancers stimulated by HBx contain DNA binding sites for NF-kappa-B, AP-1, AP-2, c-EBP, ATF/CREB, or the calcium-activated factor NF-AT. This is Protein X from Homo sapiens (Human).